The chain runs to 465 residues: Monogalactosyldiacylglycerol synthase 3, chloroplastic (465 aa).

UDP contacts are provided by residues histidine 86, arginine 255, 365 to 369, and glutamate 387; that span reads GTIAE.

This sequence belongs to the glycosyltransferase 28 family. Expressed mainly in roots. Detected in flowers, leaves, stems, siliques and pollen tubes.

The protein resides in the plastid. It is found in the chloroplast outer membrane. It catalyses the reaction a 1,2-diacyl-sn-glycerol + UDP-alpha-D-galactose = a 1,2-diacyl-3-O-(beta-D-galactosyl)-sn-glycerol + UDP + H(+). The catalysed reaction is 1,2-di-(9Z,12Z-octadecadienoyl)-sn-glycerol + UDP-alpha-D-galactose = 1,2-di-(9Z,12Z-octadecadienoyl)-3-beta-D-galactosyl-sn-glycerol + UDP + H(+). The enzyme catalyses 1-(9Z-octadecenoyl)-2-hexadecanoyl-sn-glycerol + UDP-alpha-D-galactose = 1-(9Z-octadecenoyl)-2-hexadecanoyl-3-beta-D-galactosyl-sn-glycerol + UDP + H(+). It carries out the reaction 1,2-di-(9Z-octadecenoyl)-sn-glycerol + UDP-alpha-D-galactose = 1,2-di-(9Z-octadecenoyl)-3-beta-D-galactosyl-sn-glycerol + UDP + H(+). Inhibited by galvestine-1. Involved in the synthesis of monogalactosyldiacylglycerol, the major structural component of photosynthetic membranes and in the chloroplast envelope biogenesis. Can use both prokaryotic (18:1/16:0) or eukaryotic (18:2/18:2) 1,2-diacylglycerol species, but operates with some preference for the eukaryotic one. Plays a minor role in galactolipid synthesis in chloroplasts. Is essential for membrane lipid remodeling in phosphate-starved roots. Acts as the major factor involved in digalactosyldiacylglycerol (DGDG) biosynthesis in phosphate-starved roots. Does not seem to be required for plant growth under nutrient-sufficient conditions. Required for membrane lipid remodeling in plants grown in acidic conditions. In Arabidopsis thaliana (Mouse-ear cress), this protein is Monogalactosyldiacylglycerol synthase 3, chloroplastic.